The sequence spans 263 residues: 3'-5' ssDNA/RNA exonuclease TatD (263 aa).

A divalent metal cation contacts are provided by Glu-91, His-127, and His-152.

It belongs to the metallo-dependent hydrolases superfamily. TatD-type hydrolase family. TatD subfamily. Monomer. It depends on Mg(2+) as a cofactor.

Its subcellular location is the cytoplasm. 3'-5' exonuclease that prefers single-stranded DNA and RNA. May play a role in the H(2)O(2)-induced DNA damage repair. This is 3'-5' ssDNA/RNA exonuclease TatD from Cronobacter turicensis (strain DSM 18703 / CCUG 55852 / LMG 23827 / z3032).